Here is a 36-residue protein sequence, read N- to C-terminus: Pancreatic polypeptide (36 aa).

Tyrosine 36 carries the post-translational modification Tyrosine amide.

The protein belongs to the NPY family.

The protein localises to the secreted. In terms of biological role, hormone secreted by pancreatic cells that acts as a regulator of pancreatic and gastrointestinal functions. This Larus argentatus (Herring gull) protein is Pancreatic polypeptide (PPY).